A 493-amino-acid chain; its full sequence is 3-octaprenyl-4-hydroxybenzoate carboxy-lyase (493 aa).

Residue asparagine 172 participates in Mn(2+) binding. Residues isoleucine 175–arginine 177, arginine 189–leucine 191, and arginine 194–glycine 195 each bind prenylated FMN. Residue glutamate 238 coordinates Mn(2+). Catalysis depends on aspartate 287, which acts as the Proton donor.

Belongs to the UbiD family. In terms of assembly, homohexamer. Requires prenylated FMN as cofactor. The cofactor is Mn(2+).

It is found in the cell membrane. It catalyses the reaction a 4-hydroxy-3-(all-trans-polyprenyl)benzoate + H(+) = a 2-(all-trans-polyprenyl)phenol + CO2. The protein operates within cofactor biosynthesis; ubiquinone biosynthesis. Catalyzes the decarboxylation of 3-octaprenyl-4-hydroxy benzoate to 2-octaprenylphenol, an intermediate step in ubiquinone biosynthesis. In Shewanella loihica (strain ATCC BAA-1088 / PV-4), this protein is 3-octaprenyl-4-hydroxybenzoate carboxy-lyase.